Consider the following 204-residue polypeptide: Nascent polypeptide-associated complex subunit alpha (204 aa).

Residues 1 to 19 (MADPRVEELPDEEVPKANV) are compositionally biased toward basic and acidic residues. Disordered regions lie at residues 1-47 (MADP…IHSR) and 118-167 (QLAA…GLEA). Residues 22 to 32 (AGSDSESEAGE) are compositionally biased toward acidic residues. In terms of domain architecture, NAC-A/B spans 46–111 (SRNEKKARKA…AKIEDLNSQA (66 aa)). Over residues 118 to 128 (QLAAAEAAAGE) the composition is skewed to low complexity. Positions 129 to 151 (HAGHDHDHDHGKGKAPETEAKKE) are enriched in basic and acidic residues. A compositionally biased stretch (acidic residues) spans 152–164 (EEEDDGEEVDETG). One can recognise a UBA domain in the interval 165 to 204 (LEAKDIELVMAQANVSRKKAVKALRENDNDIVNSIMALSI).

Belongs to the NAC-alpha family. In terms of assembly, part of the nascent polypeptide-associated complex (NAC), consisting of egd2 and egd1. NAC associates with ribosomes via egd1.

It localises to the cytoplasm. Its subcellular location is the nucleus. Its function is as follows. Component of the nascent polypeptide-associated complex (NAC), a dynamic component of the ribosomal exit tunnel, protecting the emerging polypeptides from interaction with other cytoplasmic proteins to ensure appropriate nascent protein targeting. The NAC complex also promotes mitochondrial protein import by enhancing productive ribosome interactions with the outer mitochondrial membrane and blocks the inappropriate interaction of ribosomes translating non-secretory nascent polypeptides with translocation sites in the membrane of the endoplasmic reticulum. Egd2 may also be involved in transcription regulation. This chain is Nascent polypeptide-associated complex subunit alpha (egd2), found in Aspergillus fumigatus (strain ATCC MYA-4609 / CBS 101355 / FGSC A1100 / Af293) (Neosartorya fumigata).